We begin with the raw amino-acid sequence, 111 residues long: Large ribosomal subunit protein P2B (111 aa).

Positions 62 to 111 are disordered; the sequence is LASVPSGGAAAGGASASTGAAAGGAAEAEEEKEEEAKEESDDDMGFGLFD. Residues 67 to 87 are compositionally biased toward low complexity; the sequence is SGGAAAGGASASTGAAAGGAA. Residues 88 to 105 are compositionally biased toward acidic residues; that stretch reads EAEEEKEEEAKEESDDDM. Position 101 is a phosphoserine (serine 101).

This sequence belongs to the eukaryotic ribosomal protein P1/P2 family.

Plays an important role in the elongation step of protein synthesis. This is Large ribosomal subunit protein P2B (RPP2B) from Candida albicans (Yeast).